The following is a 182-amino-acid chain: Ribosome-recycling factor (182 aa).

The interval 136-158 (IKKQEKEGDLSEDQSRDEQDQVQ) is disordered.

It belongs to the RRF family.

The protein localises to the cytoplasm. In terms of biological role, responsible for the release of ribosomes from messenger RNA at the termination of protein biosynthesis. May increase the efficiency of translation by recycling ribosomes from one round of translation to another. In Synechococcus sp. (strain CC9311), this protein is Ribosome-recycling factor.